A 185-amino-acid chain; its full sequence is Ribosome-recycling factor (185 aa).

It belongs to the RRF family.

It localises to the cytoplasm. Its function is as follows. Responsible for the release of ribosomes from messenger RNA at the termination of protein biosynthesis. May increase the efficiency of translation by recycling ribosomes from one round of translation to another. This chain is Ribosome-recycling factor, found in Streptococcus mutans serotype c (strain ATCC 700610 / UA159).